A 347-amino-acid polypeptide reads, in one-letter code: NADH-ubiquinone oxidoreductase chain 2 (347 aa).

Helical transmembrane passes span 3-23 (PMTFTVLLATIMSGTSIVLLS), 25-45 (HWFMTWLGFEMNMMAIIPVLM), 59-79 (YFLTQATASMILVLAIIINTM), 96-116 (ILITLALVMKLGLAPFHFWVP), 127-147 (GLILLTWQKIAPLSLLYQIYP), 149-169 (LNTNLLLTMSLLSIMIGGWGG), 178-198 (IMAYSSIAHMGWMIAIMTYNP), 201-221 (SLLNLIIYITMTSSMFMLLII), 239-259 (IVTTMMLISLLSLGGLPPLTG), 274-294 (NSLILPTLMSILALLNLFFYM), and 326-346 (TAPLISISTMILPLTPLLITL).

This sequence belongs to the complex I subunit 2 family. As to quaternary structure, core subunit of respiratory chain NADH dehydrogenase (Complex I) which is composed of 45 different subunits. Interacts with TMEM242.

The protein localises to the mitochondrion inner membrane. The enzyme catalyses a ubiquinone + NADH + 5 H(+)(in) = a ubiquinol + NAD(+) + 4 H(+)(out). Its function is as follows. Core subunit of the mitochondrial membrane respiratory chain NADH dehydrogenase (Complex I) which catalyzes electron transfer from NADH through the respiratory chain, using ubiquinone as an electron acceptor. Essential for the catalytic activity and assembly of complex I. The sequence is that of NADH-ubiquinone oxidoreductase chain 2 from Sylvisorex ollula (Greater forest shrew).